The sequence spans 380 residues: Erythronate-4-phosphate dehydrogenase (380 aa).

The substrate site is built by Ser45 and Thr66. NAD(+) contacts are provided by residues Asp146, Thr174, 205–207, and Asp231; that span reads ASR. Arg207 is a catalytic residue. Residue Glu236 is part of the active site. His253 serves as the catalytic Proton donor. Position 256 (Gly256) interacts with NAD(+). Tyr257 lines the substrate pocket.

It belongs to the D-isomer specific 2-hydroxyacid dehydrogenase family. PdxB subfamily. As to quaternary structure, homodimer.

Its subcellular location is the cytoplasm. The catalysed reaction is 4-phospho-D-erythronate + NAD(+) = (R)-3-hydroxy-2-oxo-4-phosphooxybutanoate + NADH + H(+). The protein operates within cofactor biosynthesis; pyridoxine 5'-phosphate biosynthesis; pyridoxine 5'-phosphate from D-erythrose 4-phosphate: step 2/5. Its function is as follows. Catalyzes the oxidation of erythronate-4-phosphate to 3-hydroxy-2-oxo-4-phosphonooxybutanoate. The protein is Erythronate-4-phosphate dehydrogenase of Pseudomonas fluorescens (strain SBW25).